Here is a 468-residue protein sequence, read N- to C-terminus: Putative FBD-associated F-box protein At5g22720 (468 aa).

The F-box domain occupies 22-68 (EDLISQLPDSLITQILFYLQTKKAVTTSVLSKRWRSLWLSTPGLVLI). The FBD domain maps to 375–433 (ELRLSFVPRCLLSSLEFVEIKGCSRSNMERVKYVGEPIETKLARYFVENSTILKKLVLP).

This chain is Putative FBD-associated F-box protein At5g22720, found in Arabidopsis thaliana (Mouse-ear cress).